Reading from the N-terminus, the 114-residue chain is Protein ORF3 (114 aa).

Hydrophobic stretches follow at residues 6-24 (WALGLFCCCSSCFCLCCSR) and 33-53 (AVVGGAAAVPAVVSGVTGLIL). An interaction with host HPX region spans residues 28–68 (VSRLAAVVGGAAAVPAVVSGVTGLILSPSQSPIFIQPTPSP). The interval 48 to 72 (VTGLILSPSQSPIFIQPTPSPRMSP) is interaction with the capsid protein. Serine 71 carries the post-translational modification Phosphoserine; by host. The interval 72–114 (PLRPGLDLVFANPSDHSAPLGATRPSAPPLPHVVDLPQLGPRR) is homodimerization, and interaction with host AMBP/bikunin. The segment at 85–114 (SDHSAPLGATRPSAPPLPHVVDLPQLGPRR) is disordered. Residues 95–104 (RPSAPPLPHV) form an interaction with host SRC, HCK, FYN, PIK3R3 and GRB2 region. Residues 96–99 (PSAP) carry the PTAP/PSAP motif motif.

It belongs to the hepevirus ORF3 protein family. As to quaternary structure, forms homooligomers. Interacts with host SRC, HCK, FYN, PIK3R3 and GRB2 (via SH3 domain); binding does not activate the kinases. Interacts with host AMBP/bikunin and AMBP/alpha-1-microglobulin peptides. Interacts with host HPX/hemopexin. Interacts (when phosphorylated) with capsid protein ORF2. Interacts with host TSG101; this interaction plays a role in viral release from the host cell. Interacts with host SIRPA; this interaction down-regulates the phosphorylation of host IRF3. Palmitoylated in the N-terminus.

The protein resides in the host endoplasmic reticulum membrane. It is found in the host cytoplasm. Its subcellular location is the host cytoskeleton. The protein localises to the virion. It localises to the host cell membrane. Its function is as follows. Small multifunctional phosphoprotein involved in virion morphogenesis, egress and counteracting host innate immunity. Plays critical roles in the final steps of viral release by interacting with host TSG101, a member of the vacuolar protein-sorting pathway and using other cellular host proteins involved in vesicle formation pathway. Also acts as a viroporin and forms ion conductive pores allowing viral particle release. Impairs the generation of type I interferon by down-regulating host TLR3 and TLR7 as well as their downstream signaling pathways. Down-regulates the phosphorylation of host IRF3 via the interaction with host SIRP-alpha, thereby inhibiting IFN-I expression. Interacts with host microtubules. This Hepatitis E virus genotype 1 (isolate Human/India/Hyderabad) (HEV-1) protein is Protein ORF3.